Here is a 366-residue protein sequence, read N- to C-terminus: RISC-loading complex subunit TARBP2 (366 aa).

Sufficient for interaction with PRKRA regions lie at residues 22-105, 152-234, and 287-366; these read MLAA…EPAL, SPQQ…DARD, and LGAL…AGSK. The DRBM 1 domain occupies 30 to 97; that stretch reads TPISLLQEYG…AEVALKHLKG (68 aa). Ser-152 carries the post-translational modification Phosphoserine. DRBM domains follow at residues 159 to 227 and 293 to 361; these read NPVG…RVHT and ACCR…YLKI. A sufficient for interaction with DICER1 region spans residues 228-366; the sequence is VPLDARDGNE…QYLKIMAGSK (139 aa).

This sequence belongs to the TARBP2 family. As to quaternary structure, self-associates. Component of the RISC loading complex (RLC), or micro-RNA (miRNA) loading complex (miRLC), which is composed of DICER1, AGO2 and TARBP2. Note that the trimeric RLC/miRLC is also referred to as RISC. Interacts with EIF2AK2/PKR and inhibits its protein kinase activity. Interacts with DHX9 and PRKRA. Interacts with DICER1, AGO2, MOV10, EIF6 and RPL7A (60S ribosome subunit); they form a large RNA-induced silencing complex (RISC). Interacts with IRF7; this interaction prevents IRF7 phosphorylation and activation. In terms of assembly, (Microbial infection) Interacts with FTSJ3; forms a complex with FTSJ3 and HIV-1 TAR RNA. (Microbial infection) Interacts with ebolavirus VP30; this interaction, which occurs only in the presence of siRNA, prevents TARBP2 binding to DICER1 and thus allows the virus to counteract host RNA silencing. As to quaternary structure, (Microbial infection) Interacts with ebolavirus VP35; this interaction prevents TARBP2 binding to DICER1 and thus allows the virus to counteract host RNA silencing.

It localises to the cytoplasm. It is found in the perinuclear region. The protein localises to the nucleus. Functionally, required for formation of the RNA induced silencing complex (RISC). Component of the RISC loading complex (RLC), also known as the micro-RNA (miRNA) loading complex (miRLC), which is composed of DICER1, AGO2 and TARBP2. Within the RLC/miRLC, DICER1 and TARBP2 are required to process precursor miRNAs (pre-miRNAs) to mature miRNAs and then load them onto AGO2. AGO2 bound to the mature miRNA constitutes the minimal RISC and may subsequently dissociate from DICER1 and TARBP2. May also play a role in the production of short interfering RNAs (siRNAs) from double-stranded RNA (dsRNA) by DICER1. Binds in vitro to the PRM1 3'-UTR. Seems to act as a repressor of translation. For some pre-miRNA substrates, may also alter the choice of cleavage site by DICER1. Negatively regulates IRF7-mediated IFN-beta signaling triggered by viral infection by inhibiting the phosphorylation of IRF7 and promoting its 'Lys'-48-linked ubiquitination and degradation. Its function is as follows. (Microbial infection) Binds to the HIV-1 TAR RNA which is located in the long terminal repeat (LTR) of HIV-1, and stimulates translation of TAR-containing RNAs. This is achieved in part at least by binding to and inhibiting EIF2AK2/PKR, thereby reducing phosphorylation and inhibition of EIF2S1/eIF-2-alpha. May also promote translation of TAR-containing RNAs independently of EIF2AK2/PKR. Mediates recruitment of FTSJ3 methyltransferase to HIV-1 RNA, leading to 2'-O-methylation of the viral genome, allowing HIV-1 to escape the innate immune system. The chain is RISC-loading complex subunit TARBP2 from Homo sapiens (Human).